A 535-amino-acid polypeptide reads, in one-letter code: Probable cytochrome P450 12b2, mitochondrial (535 aa).

Cys479 serves as a coordination point for heme.

The protein belongs to the cytochrome P450 family. Requires heme as cofactor.

The protein localises to the mitochondrion membrane. The sequence is that of Probable cytochrome P450 12b2, mitochondrial (Cyp12b2) from Drosophila melanogaster (Fruit fly).